A 330-amino-acid polypeptide reads, in one-letter code: Autoinducer 2 import system permease protein LsrD (330 aa).

Over 1-4 (MRIR) the chain is Cytoplasmic. A helical membrane pass occupies residues 5–25 (YGWELALAALLVIEIVSFGAI). Topologically, residues 26-42 (NPRMLDLNMLLFSTSDF) are periplasmic. The chain crosses the membrane as a helical span at residues 43 to 63 (ICIGIVALPLTMVIVSGGIDI). The Cytoplasmic portion of the chain corresponds to 64–67 (SFGS). The next 2 helical transmembrane spans lie at 68-88 (TIGLCAIALGVLFQSGVPMPL) and 89-109 (AILLTLLLGALCGLINAGLII). Residues 110 to 115 (YTKVNP) lie on the Cytoplasmic side of the membrane. A helical membrane pass occupies residues 116–136 (LVITLGTLYLFAGSALLLSGM). At 137–159 (AGATGYEGIGGFPMAFTDFANLD) the chain is on the periplasmic side. A helical membrane pass occupies residues 160-180 (VLGLPVPLIIFLICLLVFWLW). The Cytoplasmic segment spans residues 181 to 209 (LHKTHAGRNVFLIGQSPRVALYSAIPVNR). Residues 210 to 230 (TLCALYAMTGLASAVAAVLLV) traverse the membrane as a helical segment. Residues 231 to 237 (SYFGSAR) are Periplasmic-facing. 2 helical membrane passes run 238–258 (SDLGASFLMPAITAVVLGGAN) and 259–279 (IYGGSGAIIGTAIAVLLVGYL). At 280 to 285 (QQGLQM) the chain is on the periplasmic side. A helical transmembrane segment spans residues 286–306 (AGVPNQVSSALSGALLIVVVV). The Cytoplasmic segment spans residues 307–330 (GRSVSLHRQQIKEWLARRANNPLP).

The protein belongs to the binding-protein-dependent transport system permease family. AraH/RbsC subfamily. As to quaternary structure, the complex is composed of two ATP-binding proteins (LsrA), two transmembrane proteins (LsrC and LsrD) and a solute-binding protein (LsrB).

It localises to the cell inner membrane. Functionally, part of the ABC transporter complex LsrABCD involved in autoinducer 2 (AI-2) import. Probably responsible for the translocation of the substrate across the membrane. The chain is Autoinducer 2 import system permease protein LsrD (lsrD) from Escherichia coli O157:H7.